Reading from the N-terminus, the 451-residue chain is Enolase (451 aa).

Glutamine 163 is a (2R)-2-phosphoglycerate binding site. Glutamate 205 acts as the Proton donor in catalysis. Residues aspartate 258, glutamate 308, and aspartate 335 each coordinate Mg(2+). (2R)-2-phosphoglycerate contacts are provided by lysine 360, arginine 389, serine 390, and lysine 411. The Proton acceptor role is filled by lysine 360.

This sequence belongs to the enolase family. Mg(2+) is required as a cofactor.

Its subcellular location is the cytoplasm. It localises to the secreted. It is found in the cell surface. The catalysed reaction is (2R)-2-phosphoglycerate = phosphoenolpyruvate + H2O. It participates in carbohydrate degradation; glycolysis; pyruvate from D-glyceraldehyde 3-phosphate: step 4/5. Its function is as follows. Catalyzes the reversible conversion of 2-phosphoglycerate (2-PG) into phosphoenolpyruvate (PEP). It is essential for the degradation of carbohydrates via glycolysis. This chain is Enolase, found in Mycoplasma mycoides subsp. mycoides SC (strain CCUG 32753 / NCTC 10114 / PG1).